We begin with the raw amino-acid sequence, 62 residues long: Defensin BmKDfsin3 (62 aa).

A signal peptide spans 1-24; sequence MKTIVILFVLALVFCTLEMGMVEA. 3 disulfides stabilise this stretch: cysteine 28-cysteine 49, cysteine 35-cysteine 57, and cysteine 39-cysteine 59.

It belongs to the invertebrate defensin family. Type 2 subfamily. In terms of tissue distribution, low expression in both venom and non-venom glands (hemolymph).

The protein resides in the secreted. Its function is as follows. Antibacterial peptide active against Gram-positive bacteria (including S.aureus ATCC25923 (MIC=2.5 uM), M.luteus AB93113 (MIC=2.5 uM), and the antibiotic-resistant S.epidermidis PRSE P1389 (MIC=1.25 uM)), but not against Gram-negative bacteria (including E.coli and P.aeruginosa). Also blocks the currents of Kv1.1/KCNA1 (57% inhibition), Kv1.2/KCNA2 (27.5% inhibition), Kv1.3/KCNA3 (IC(50)=23.4 nM, 84.3% inhibition), KCa3.1/KCNN4/IK (15% inhibition), KCa2.3/KCNN3/SK3 (87.5% inhibition) and Kv11.1/KCNH2/ERG1 (30.4% inhibition) channels (tested at 1 uM). It inhibits potassium channel current by interacting with the pore region. The chain is Defensin BmKDfsin3 from Olivierus martensii (Manchurian scorpion).